We begin with the raw amino-acid sequence, 199 residues long: GTP cyclohydrolase-2 (199 aa).

49–53 (RIHSE) is a GTP binding site. Cys54, Cys65, and Cys67 together coordinate Zn(2+). Residues Gln70, 92-94 (EGR), and Thr114 each bind GTP. Asp126 serves as the catalytic Proton acceptor. Arg128 acts as the Nucleophile in catalysis. The GTP site is built by Thr149 and Lys154.

This sequence belongs to the GTP cyclohydrolase II family. In terms of assembly, homodimer. Requires Zn(2+) as cofactor.

The enzyme catalyses GTP + 4 H2O = 2,5-diamino-6-hydroxy-4-(5-phosphoribosylamino)-pyrimidine + formate + 2 phosphate + 3 H(+). It participates in cofactor biosynthesis; riboflavin biosynthesis; 5-amino-6-(D-ribitylamino)uracil from GTP: step 1/4. Its function is as follows. Catalyzes the conversion of GTP to 2,5-diamino-6-ribosylamino-4(3H)-pyrimidinone 5'-phosphate (DARP), formate and pyrophosphate. This is GTP cyclohydrolase-2 from Proteus mirabilis (strain HI4320).